We begin with the raw amino-acid sequence, 705 residues long: Polyribonucleotide nucleotidyltransferase (705 aa).

Mg(2+) contacts are provided by aspartate 485 and aspartate 491. The 60-residue stretch at 552–611 folds into the KH domain; that stretch reads PRVYTMTIAPEKIRDVIGAGGKTINKIIGETGVQIDIKEDGKIYVMSSDSVGANRALKMI. The S1 motif domain maps to 621–689; the sequence is GEIYLGKVTR…DQGRINLSRR (69 aa).

Belongs to the polyribonucleotide nucleotidyltransferase family. Mg(2+) serves as cofactor.

The protein localises to the cytoplasm. The enzyme catalyses RNA(n+1) + phosphate = RNA(n) + a ribonucleoside 5'-diphosphate. Functionally, involved in mRNA degradation. Catalyzes the phosphorolysis of single-stranded polyribonucleotides processively in the 3'- to 5'-direction. This Clostridium tetani (strain Massachusetts / E88) protein is Polyribonucleotide nucleotidyltransferase.